Consider the following 825-residue polypeptide: Probable phosphoketolase (825 aa).

This sequence belongs to the XFP family. Requires thiamine diphosphate as cofactor.

The chain is Probable phosphoketolase from Bifidobacterium animalis subsp. lactis (strain AD011).